We begin with the raw amino-acid sequence, 310 residues long: Cytochrome f (310 aa).

Residues 1–23 (MRRLLSSTFAALIVGLAVFSAPA) form the signal peptide. Residues Tyr-28, Cys-48, Cys-51, and His-52 each contribute to the heme site. The chain crosses the membrane as a helical span at residues 277-297 (IYGMLAFFAAVALAQIMLVLK).

The protein belongs to the cytochrome f family. As to quaternary structure, the 4 large subunits of the cytochrome b6-f complex are cytochrome b6, subunit IV (17 kDa polypeptide, PetD), cytochrome f and the Rieske protein, while the 4 small subunits are PetG, PetL, PetM and PetN. The complex functions as a dimer. Heme serves as cofactor.

The protein localises to the cellular thylakoid membrane. In terms of biological role, component of the cytochrome b6-f complex, which mediates electron transfer between photosystem II (PSII) and photosystem I (PSI), cyclic electron flow around PSI, and state transitions. The sequence is that of Cytochrome f from Synechococcus sp. (strain CC9311).